Here is a 148-residue protein sequence, read N- to C-terminus: 3-hydroxyacyl-[acyl-carrier-protein] dehydratase FabZ (148 aa).

Residue His55 is part of the active site.

This sequence belongs to the thioester dehydratase family. FabZ subfamily.

It localises to the cytoplasm. The catalysed reaction is a (3R)-hydroxyacyl-[ACP] = a (2E)-enoyl-[ACP] + H2O. Its function is as follows. Involved in unsaturated fatty acids biosynthesis. Catalyzes the dehydration of short chain beta-hydroxyacyl-ACPs and long chain saturated and unsaturated beta-hydroxyacyl-ACPs. The protein is 3-hydroxyacyl-[acyl-carrier-protein] dehydratase FabZ of Haemophilus influenzae (strain 86-028NP).